The chain runs to 288 residues: GTP-binding protein 8 (288 aa).

Positions 109–282 (HRPEVCFIGR…RCFIADITGN (174 aa)) constitute an EngB-type G domain. GTP-binding positions include 117–124 (GRSNVGKS), 146–150 (GHTKK), 164–167 (DMPG), 226–229 (TKID), and 261–263 (VSA). S124 and T148 together coordinate Mg(2+).

It belongs to the TRAFAC class TrmE-Era-EngA-EngB-Septin-like GTPase superfamily. EngB GTPase family. The cofactor is Mg(2+).

The protein is GTP-binding protein 8 (GTPBP8) of Bos taurus (Bovine).